The chain runs to 347 residues: S-adenosylmethionine:tRNA ribosyltransferase-isomerase (347 aa).

The protein belongs to the QueA family. In terms of assembly, monomer.

Its subcellular location is the cytoplasm. The catalysed reaction is 7-aminomethyl-7-carbaguanosine(34) in tRNA + S-adenosyl-L-methionine = epoxyqueuosine(34) in tRNA + adenine + L-methionine + 2 H(+). The protein operates within tRNA modification; tRNA-queuosine biosynthesis. In terms of biological role, transfers and isomerizes the ribose moiety from AdoMet to the 7-aminomethyl group of 7-deazaguanine (preQ1-tRNA) to give epoxyqueuosine (oQ-tRNA). The chain is S-adenosylmethionine:tRNA ribosyltransferase-isomerase from Bordetella bronchiseptica (strain ATCC BAA-588 / NCTC 13252 / RB50) (Alcaligenes bronchisepticus).